Reading from the N-terminus, the 271-residue chain is (+)-cis,trans-nepetalactol synthase NEPS1 (271 aa).

NAD(+) is bound by residues 24 to 30 (GGASGIG), 49 to 51 (DIQ), 72 to 73 (DV), and Asn-99. Residues Thr-154 and Tyr-167 each contribute to the substrate site. NAD(+) contacts are provided by residues Tyr-167, Lys-171, and 200 to 205 (VLTPLA). Catalysis depends on Tyr-167, which acts as the Proton acceptor.

It belongs to the short-chain dehydrogenases/reductases (SDR) family.

It catalyses the reaction (S)-8-oxocitronellyl enol = cis-trans-nepetalactol. The enzyme catalyses cis-cis-nepetalactol + NAD(+) = cis-cis-nepetalactone + NADH + H(+). The catalysed reaction is cis-trans-nepetalactol + NAD(+) = cis-trans-nepetalactone + NADH + H(+). Its function is as follows. Bifunctional enzyme that possesses cyclase and dehydrogenase activities. Functions as a non-oxidoreductive cyclase to promote the formation of cis-trans-nepetalactol. Functions as dehydrogenase to oxidize cis-cis-nepetalactol and cis-trans-nepetalactol into nepetalactones, metabolites that are both insect-repellent and have euphoric effect in cats. Binds NAD(+) as classical short-chain dehydrogenase/reductase (SDR), but does not utilize it for its redox-neutral cyclase activity. This is (+)-cis,trans-nepetalactol synthase NEPS1 from Nepeta racemosa (Catmint).